A 273-amino-acid chain; its full sequence is Protein FAM210A (273 aa).

Over residues 97-106 (SSSATSSGPP) the composition is skewed to low complexity. Positions 97-116 (SSSATSSGPPSEKKEDPDPL) are disordered. A compositionally biased stretch (basic and acidic residues) spans 107–116 (SEKKEDPDPL). The 113-residue stretch at 118–230 (DRSISLYQRF…GYMSTPPPVK (113 aa)) folds into the DUF1279 domain. A helical membrane pass occupies residues 137-157 (VLIPVHLITSAVWFGTFYYAA). Residues 230 to 269 (KEYLQDKMEETKELLTEKMEETKDRLTEKLQETKGKVSLK) adopt a coiled-coil conformation. The disordered stretch occupies residues 247–273 (KMEETKDRLTEKLQETKGKVSLKKKVE).

It belongs to the FAM210 family. Interacts with ATAD3A.

The protein resides in the membrane. Its subcellular location is the mitochondrion. The protein localises to the cytoplasm. Its function is as follows. May play a role in the structure and strength of both muscle and bone. The protein is Protein FAM210A (FAM210A) of Bos taurus (Bovine).